The chain runs to 349 residues: Signal peptidase I (349 aa).

The next 2 helical transmembrane spans lie at 3 to 23 (NLFF…LDYF) and 25 to 45 (LPNT…VLWC). Residues 46–80 (YHRFVVLPKRHRQVARAEQRSGKTLSEEEKAKIEP) are Cytoplasmic-facing. A helical transmembrane segment spans residues 81–101 (ISEASEFLSSLFPVLAVVFLV). Topologically, residues 102–349 (RSFLFEPFQI…RFERFFTAIK (248 aa)) are periplasmic. Catalysis depends on residues Ser-115 and Lys-196.

It belongs to the peptidase S26 family.

It localises to the cell inner membrane. The enzyme catalyses Cleavage of hydrophobic, N-terminal signal or leader sequences from secreted and periplasmic proteins.. This is Signal peptidase I (lepB) from Haemophilus influenzae (strain ATCC 51907 / DSM 11121 / KW20 / Rd).